The following is a 316-amino-acid chain: Ribosomal RNA small subunit methyltransferase H (316 aa).

S-adenosyl-L-methionine contacts are provided by residues 42-44 (GGH), D62, F86, D104, and Q111.

The protein belongs to the methyltransferase superfamily. RsmH family.

The protein resides in the cytoplasm. It carries out the reaction cytidine(1402) in 16S rRNA + S-adenosyl-L-methionine = N(4)-methylcytidine(1402) in 16S rRNA + S-adenosyl-L-homocysteine + H(+). In terms of biological role, specifically methylates the N4 position of cytidine in position 1402 (C1402) of 16S rRNA. In Polynucleobacter asymbioticus (strain DSM 18221 / CIP 109841 / QLW-P1DMWA-1) (Polynucleobacter necessarius subsp. asymbioticus), this protein is Ribosomal RNA small subunit methyltransferase H.